The primary structure comprises 43 residues: Protein PsbN 2 (43 aa).

A helical transmembrane segment spans residues 4 to 24; it reads ATILGISIAAALVGITVLALY.

This sequence belongs to the PsbN family.

It localises to the cellular thylakoid membrane. Functionally, may play a role in photosystem I and II biogenesis. In Microcystis aeruginosa (strain NIES-843 / IAM M-2473), this protein is Protein PsbN 2.